A 520-amino-acid chain; its full sequence is Beta-2-syntrophin (520 aa).

The segment at 45-95 is disordered; the sequence is EPPAAAFNGLPNGGGGESLPGSPNRGLGPPSPPAPPRGPAGEASASPPVRR. Low complexity predominate over residues 63 to 72; sequence LPGSPNRGLG. Residues 73–82 show a composition bias toward pro residues; the sequence is PPSPPAPPRG. Ser75, Ser90, Ser109, Ser191, Ser202, Ser213, Ser373, and Ser375 each carry phosphoserine. Over residues 83–93 the composition is skewed to low complexity; the sequence is PAGEASASPPV. Residues 95-178 form the PDZ domain; it reads RVRVVKQEAG…EVLLEVKFIR (84 aa). 2 PH domains span residues 143–280 and 305–417; these read ILSV…TNIM and EVKH…QGCH. The tract at residues 195-220 is disordered; the sequence is WEGASPQSPSFSGSEDSGSPKHQNTT. The span at 197-211 shows a compositional bias: low complexity; sequence GASPQSPSFSGSEDS. One can recognise an SU domain in the interval 464-520; the sequence is PFERLKMSADDGIRNLYLDFGGPEGELTMDLHSCPKPIVFVLHTFLSAKVTRMGLLV. The interval 498-520 is calmodulin-binding; the sequence is PKPIVFVLHTFLSAKVTRMGLLV.

It belongs to the syntrophin family. As to quaternary structure, monomer and homodimer. Interacts with the dystrophin protein DMD and related protein DTNA; and with the other members of the syntrophin family: SNTA1 and SNTB1. Interacts with the neuroregulin receptor ERBB4. Interacts with PTPRN when phosphorylated, protecting PTPRN from protein cleavage by CAPN1. Dephosphorylation upon insulin stimulation disrupts the interaction with PTPRN and results in the cleavage of PTPRN. Interacts with the sodium channel proteins SCN4A and SCN5A. Interacts with SAST, MAST205, microtubules and microtubule-associated proteins. Interacts with the dystrophin related protein UTRN. Interacts with DTNB. Phosphorylated. Partially dephosphorylated upon insulin stimulation. As to expression, ubiquitous. Expressed at high levels in the testis.

The protein resides in the membrane. It localises to the cytoplasmic vesicle. The protein localises to the secretory vesicle membrane. Its subcellular location is the cell junction. It is found in the cytoplasm. The protein resides in the cytoskeleton. Its function is as follows. Adapter protein that binds to and probably organizes the subcellular localization of a variety of membrane proteins. May link various receptors to the actin cytoskeleton and the dystrophin glycoprotein complex. May play a role in the regulation of secretory granules via its interaction with PTPRN. This Mus musculus (Mouse) protein is Beta-2-syntrophin (Sntb2).